Here is a 56-residue protein sequence, read N- to C-terminus: Small ribosomal subunit protein uS14A (56 aa).

Zn(2+)-binding residues include C21 and C24. S25 bears the Phosphoserine mark. Zn(2+)-binding residues include C39 and C42.

It belongs to the universal ribosomal protein uS14 family. As to quaternary structure, component of the small ribosomal subunit (SSU). Mature yeast ribosomes consist of a small (40S) and a large (60S) subunit. The 40S small subunit contains 1 molecule of ribosomal RNA (18S rRNA) and 33 different proteins (encoded by 57 genes). The large 60S subunit contains 3 rRNA molecules (25S, 5.8S and 5S rRNA) and 46 different proteins (encoded by 81 genes). Zn(2+) is required as a cofactor.

It localises to the cytoplasm. In terms of biological role, component of the ribosome, a large ribonucleoprotein complex responsible for the synthesis of proteins in the cell. The small ribosomal subunit (SSU) binds messenger RNAs (mRNAs) and translates the encoded message by selecting cognate aminoacyl-transfer RNA (tRNA) molecules. The large subunit (LSU) contains the ribosomal catalytic site termed the peptidyl transferase center (PTC), which catalyzes the formation of peptide bonds, thereby polymerizing the amino acids delivered by tRNAs into a polypeptide chain. The nascent polypeptides leave the ribosome through a tunnel in the LSU and interact with protein factors that function in enzymatic processing, targeting, and the membrane insertion of nascent chains at the exit of the ribosomal tunnel. The polypeptide is Small ribosomal subunit protein uS14A (Saccharomyces cerevisiae (strain ATCC 204508 / S288c) (Baker's yeast)).